Reading from the N-terminus, the 101-residue chain is NAD(P)H-quinone oxidoreductase subunit 4L, chloroplastic (101 aa).

The next 3 helical transmembrane spans lie at 2-22 (MLEHVLILSAYLFSIGIYGLI), 27-46 (MVRALMCLELILNAVNMNLI), and 61-81 (IFSIFVIAIAAAEAAIGPAIV).

This sequence belongs to the complex I subunit 4L family. As to quaternary structure, NDH is composed of at least 16 different subunits, 5 of which are encoded in the nucleus.

Its subcellular location is the plastid. The protein resides in the chloroplast thylakoid membrane. The catalysed reaction is a plastoquinone + NADH + (n+1) H(+)(in) = a plastoquinol + NAD(+) + n H(+)(out). It carries out the reaction a plastoquinone + NADPH + (n+1) H(+)(in) = a plastoquinol + NADP(+) + n H(+)(out). In terms of biological role, NDH shuttles electrons from NAD(P)H:plastoquinone, via FMN and iron-sulfur (Fe-S) centers, to quinones in the photosynthetic chain and possibly in a chloroplast respiratory chain. The immediate electron acceptor for the enzyme in this species is believed to be plastoquinone. Couples the redox reaction to proton translocation, and thus conserves the redox energy in a proton gradient. This Drimys granadensis protein is NAD(P)H-quinone oxidoreductase subunit 4L, chloroplastic.